We begin with the raw amino-acid sequence, 104 residues long: L-rhamnose mutarotase (104 aa).

Y18 is a binding site for substrate. Residue H22 is the Proton donor of the active site. Substrate-binding positions include Y41 and 76 to 77 (WW).

Belongs to the rhamnose mutarotase family. As to quaternary structure, homodimer.

Its subcellular location is the cytoplasm. The enzyme catalyses alpha-L-rhamnose = beta-L-rhamnose. It participates in carbohydrate metabolism; L-rhamnose metabolism. Functionally, involved in the anomeric conversion of L-rhamnose. The polypeptide is L-rhamnose mutarotase (Jannaschia sp. (strain CCS1)).